The primary structure comprises 450 residues: 23S rRNA (uracil(1939)-C(5))-methyltransferase RlmD (450 aa).

Residues 12–70 enclose the TRAM domain; the sequence is SKQLSAKLSLSVNQLDHLGAGIAQHQGKVVFIPGALPDETVTVQFTEQKKNYARAKLIK. The [4Fe-4S] cluster site is built by Cys83, Cys89, Cys92, and Cys171. Positions 283, 312, 317, 333, 360, and 380 each coordinate S-adenosyl-L-methionine. Cys406 functions as the Nucleophile in the catalytic mechanism.

Belongs to the class I-like SAM-binding methyltransferase superfamily. RNA M5U methyltransferase family. RlmD subfamily.

The catalysed reaction is uridine(1939) in 23S rRNA + S-adenosyl-L-methionine = 5-methyluridine(1939) in 23S rRNA + S-adenosyl-L-homocysteine + H(+). Functionally, catalyzes the formation of 5-methyl-uridine at position 1939 (m5U1939) in 23S rRNA. This Shewanella baltica (strain OS155 / ATCC BAA-1091) protein is 23S rRNA (uracil(1939)-C(5))-methyltransferase RlmD.